A 73-amino-acid polypeptide reads, in one-letter code: Large ribosomal subunit protein bL31 (73 aa).

It belongs to the bacterial ribosomal protein bL31 family. Type A subfamily. Part of the 50S ribosomal subunit.

Functionally, binds the 23S rRNA. This chain is Large ribosomal subunit protein bL31, found in Mesorhizobium japonicum (strain LMG 29417 / CECT 9101 / MAFF 303099) (Mesorhizobium loti (strain MAFF 303099)).